Reading from the N-terminus, the 391-residue chain is Somatostatin receptor type 1 (391 aa).

The interval 1-50 is disordered; sequence MFPNGTAPSPTSSPSSSPGGCGEGVCSRGPGSGAADGMEEPGRNSSQNGT. Residues 1-56 are Extracellular-facing; sequence MFPNGTAPSPTSSPSSSPGGCGEGVCSRGPGSGAADGMEEPGRNSSQNGTLSEGQG. N-linked (GlcNAc...) asparagine glycosylation is present at Asn4. Residues 8–18 show a composition bias toward low complexity; that stretch reads PSPTSSPSSSP. N-linked (GlcNAc...) asparagine glycosylation is found at Asn44 and Asn48. Residues 57–84 form a helical membrane-spanning segment; sequence SAILISFIYSVVCLVGLCGNSMVIYVIL. The Cytoplasmic segment spans residues 85 to 94; sequence RYAKMKTATN. A helical membrane pass occupies residues 95–120; the sequence is IYILNLAIADELLMLSVPFLVTSTLL. Residues 121-131 lie on the Extracellular side of the membrane; that stretch reads RHWPFGALLCR. A disulfide bridge links Cys130 with Cys208. The helical transmembrane segment at 132 to 153 threads the bilayer; that stretch reads LVLSVDAVNMFTSIYCLTVLSV. Topologically, residues 154–175 are cytoplasmic; sequence DRYVAVVHPIKAARYRRPTVAK. Residues 176 to 196 traverse the membrane as a helical segment; sequence VVNLGVWVLSLLVILPIVVFS. Residues 197 to 219 lie on the Extracellular side of the membrane; that stretch reads RTAANSDGTVACNMLMPEPAQRW. The chain crosses the membrane as a helical span at residues 220-244; sequence LVGFVLYTFLMGFLLPVGAICLCYV. Topologically, residues 245-270 are cytoplasmic; the sequence is LIIAKMRMVALKAGWQQRKRSERKIT. Residues 271–296 form a helical membrane-spanning segment; sequence LMVMMVVMVFVICWMPFYVVQLVNVF. Residues 297–303 lie on the Extracellular side of the membrane; that stretch reads AEQDDAT. Residues 304–327 form a helical membrane-spanning segment; it reads VSQLSVILGYANSCANPILYGFLS. Residues 328–391 are Cytoplasmic-facing; the sequence is DNFKRSFQRI…GTCASRISTL (64 aa). A lipid anchor (S-palmitoyl cysteine) is attached at Cys339.

Belongs to the G-protein coupled receptor 1 family. Brain, pituitary, islet, jejunum, stomach, heart, spleen.

It localises to the cell membrane. Its function is as follows. Receptor for somatostatin with higher affinity for somatostatin-14 than -28. This receptor is coupled to phosphotyrosine phosphatase and Na(+)/H(+) exchanger via pertussis toxin insensitive G proteins. In Rattus norvegicus (Rat), this protein is Somatostatin receptor type 1 (Sstr1).